A 1081-amino-acid chain; its full sequence is DNA polymerase catalytic subunit (1081 aa).

The protein belongs to the DNA polymerase type-B family. Forms a complex with the ssDNA-binding protein UL29, the DNA polymerase processivity factor, and the alkaline exonuclease. Interacts with the putative helicase-primase complex subunit UL8; this interaction may coordinate leading and lagging strand DNA synthesis at the replication fork.

It is found in the host nucleus. The catalysed reaction is DNA(n) + a 2'-deoxyribonucleoside 5'-triphosphate = DNA(n+1) + diphosphate. It carries out the reaction Endonucleolytic cleavage to 5'-phosphomonoester.. Replicates viral genomic DNA. The replication complex is composed of six viral proteins: the DNA polymerase, processivity factor, primase, primase-associated factor, helicase, and ssDNA-binding protein. Additionally, the polymerase contains an intrinsic ribonuclease H (RNase H) activity that specifically degrades RNA/DNA heteroduplexes or duplex DNA substrates in the 5' to 3' direction. Therefore, it can catalyze the excision of the RNA primers that initiate the synthesis of Okazaki fragments at a replication fork during viral DNA replication. The chain is DNA polymerase catalytic subunit (UL30) from Psittacid herpesvirus 1 (isolate Amazon parrot/-/97-0001/1997) (PsHV-1).